A 269-amino-acid polypeptide reads, in one-letter code: MRSFLNLNSIPNVAAGNSCSIKLPIGQTYEVIDLRYSGVTPSQIKNVRVELDGRLLSTYKTLNDLILENTRHKRKIKAGVVSFHFVRPEMKGVNVTDLVQQRMFALGTVGLTTCEIKFDIDEAAAGPKLSAIAQKSVGTAPSWLTMRRNFFKQLNNGTTEIADLPRPVGYRIAAIHIKAAGVDAVEFQIDGTKWRDLLKKADNDYILEQYGKAVLDNTYTIDFMLEGDVYQSVLLDQMIQDLRLKIDSTMDEQAEIIVEYMGVWSRNGF.

In terms of assembly, homotrimer.

The protein resides in the virion. Major capsid protein. This is Major capsid protein P2 (II) from Pseudoalteromonas phage PM2 (Bacteriophage PM2).